The primary structure comprises 941 residues: Bifunctional glutamine synthetase adenylyltransferase/adenylyl-removing enzyme (941 aa).

Positions 1-431 (MSSAPPFAAA…TFRNAFRLAG (431 aa)) are adenylyl removase. The segment at 447–941 (NGHGMRPHAG…DGTIAQAEVK (495 aa)) is adenylyl transferase.

Belongs to the GlnE family. Mg(2+) serves as cofactor.

The catalysed reaction is [glutamine synthetase]-O(4)-(5'-adenylyl)-L-tyrosine + phosphate = [glutamine synthetase]-L-tyrosine + ADP. It carries out the reaction [glutamine synthetase]-L-tyrosine + ATP = [glutamine synthetase]-O(4)-(5'-adenylyl)-L-tyrosine + diphosphate. In terms of biological role, involved in the regulation of glutamine synthetase GlnA, a key enzyme in the process to assimilate ammonia. When cellular nitrogen levels are high, the C-terminal adenylyl transferase (AT) inactivates GlnA by covalent transfer of an adenylyl group from ATP to specific tyrosine residue of GlnA, thus reducing its activity. Conversely, when nitrogen levels are low, the N-terminal adenylyl removase (AR) activates GlnA by removing the adenylyl group by phosphorolysis, increasing its activity. The regulatory region of GlnE binds the signal transduction protein PII (GlnB) which indicates the nitrogen status of the cell. This Bordetella bronchiseptica (strain ATCC BAA-588 / NCTC 13252 / RB50) (Alcaligenes bronchisepticus) protein is Bifunctional glutamine synthetase adenylyltransferase/adenylyl-removing enzyme.